A 777-amino-acid polypeptide reads, in one-letter code: Cullin-3 (777 aa).

Residues 568–596 (YPPPKASMSNEENGPGPSSSGESMKERKP) are disordered. Residues 576 to 589 (SNEENGPGPSSSGE) are compositionally biased toward low complexity. Residues 707 to 769 (DRKLEVEAAI…REYLARDEHD (63 aa)) form the Cullin neddylation domain. Lys721 is covalently cross-linked (Glycyl lysine isopeptide (Lys-Gly) (interchain with G-Cter in NEDD8)).

Belongs to the cullin family. In terms of assembly, probable component of multiple cullin-RING-based BCB (BTB-CUL3-BTB) E3 ubiquitin-protein ligase complexes formed by cul-3, rbx-1 and a variable BTB domain-containing protein acting as both, adapter to cullin and substrate recognition component. Interacts with bath-15, bath-40, bath-41, bath-42, C17F4.8, tag-303, D2045.8, F57C2.1, ZC239.15 and B0281.5. Interacts with mel-26 (via BTB domain). Interacts with dcn-1. Post-translationally, neddylated. Deneddylated via its interaction with the COP9 signalosome (CSN) complex.

It localises to the cytoplasm. It is found in the nucleus. It functions in the pathway protein modification; protein ubiquitination. In terms of biological role, probable core component of multiple cullin-RING-based BCB (BTB-CUL3-BTB) E3 ubiquitin-protein ligase complexes which mediate the ubiquitination and subsequent proteasomal degradation of target proteins. Probably acts as a scaffold protein which may contribute to catalysis through positioning of the substrate and the ubiquitin-conjugating enzyme. Required to target mei-3/katanin for degradation at the meiosis to mitosis transition via its neddylation and deneddylation. Functions in ubiquitin-mediated degradation of CKIs to target cki-1 for degradation. Regulates microtubule stability in the early embryo. In body wall muscles, involved in the organization of myosin thick filaments, likely by regulating the degradation of microtubule severing protein mei-1 downstream of unc-89. Together with spop-1, may promote the ubiquitination and proteasomal degradation of target bromodomain-containing proteins such as bet-1. This is Cullin-3 from Caenorhabditis elegans.